Consider the following 227-residue polypeptide: Enolase-phosphatase E1 (227 aa).

Residues D11 and E13 each contribute to the Mg(2+) site. Substrate is bound by residues 118 to 119 and K161; that span reads SS. D186 is a Mg(2+) binding site.

The protein belongs to the HAD-like hydrolase superfamily. MasA/MtnC family. Monomer. Requires Mg(2+) as cofactor.

It localises to the cytoplasm. The protein resides in the nucleus. The catalysed reaction is 5-methylsulfanyl-2,3-dioxopentyl phosphate + H2O = 1,2-dihydroxy-5-(methylsulfanyl)pent-1-en-3-one + phosphate. Its pathway is amino-acid biosynthesis; L-methionine biosynthesis via salvage pathway; L-methionine from S-methyl-5-thio-alpha-D-ribose 1-phosphate: step 3/6. The protein operates within amino-acid biosynthesis; L-methionine biosynthesis via salvage pathway; L-methionine from S-methyl-5-thio-alpha-D-ribose 1-phosphate: step 4/6. In terms of biological role, bifunctional enzyme that catalyzes the enolization of 2,3-diketo-5-methylthiopentyl-1-phosphate (DK-MTP-1-P) into the intermediate 2-hydroxy-3-keto-5-methylthiopentenyl-1-phosphate (HK-MTPenyl-1-P), which is then dephosphorylated to form the acireductone 1,2-dihydroxy-3-keto-5-methylthiopentene (DHK-MTPene). The sequence is that of Enolase-phosphatase E1 from Saccharomyces cerevisiae (strain ATCC 204508 / S288c) (Baker's yeast).